The sequence spans 331 residues: UPF0324 membrane protein SERP0111 (331 aa).

10 consecutive transmembrane segments (helical) span residues 7 to 26 (ASFM…SYIL), 31 to 48 (ILHT…AMIY), 69 to 88 (LLKF…DILG), 93 to 115 (LLLI…NQII), 122 to 144 (SILL…APIL), 154 to 176 (SVGI…EAIF), 183 to 205 (YGAW…GIGG), 249 to 271 (IPYF…IPSL), 275 to 297 (IINV…NIVL), and 308 to 330 (FIVI…SIMF).

The protein belongs to the UPF0324 family.

The protein resides in the cell membrane. The sequence is that of UPF0324 membrane protein SERP0111 from Staphylococcus epidermidis (strain ATCC 35984 / DSM 28319 / BCRC 17069 / CCUG 31568 / BM 3577 / RP62A).